We begin with the raw amino-acid sequence, 103 residues long: Protein SUP-1 (103 aa).

Positions 1–16 (MMSYIALAACIGLAMA) are cleaved as a signal peptide. At 17-75 (ANVDHDVKSAVNEVTTTKDGDTYCPVPLVGTKCGTSSIFHYWKCCGELNKECCFNLQTW) the chain is on the extracellular side. Residues 76-96 (VWVTLALFGVIFIASFVISLV) traverse the membrane as a helical segment. Topologically, residues 97–103 (RCICCRK) are cytoplasmic.

As to expression, expressed in a subset of neurons and in body wall muscles. In the nervous system, expressed specifically in cholinergic motor neurons of the ventral nerve cord, a subset of cholinergic head neurons, anterior sublateral neurons, and body sublateral neurons (at protein level).

It localises to the cell membrane. The protein localises to the perikaryon. The protein resides in the cell projection. It is found in the synapse. Its subcellular location is the cytoplasmic vesicle. It localises to the secretory vesicle. The protein localises to the synaptic vesicle. Functionally, may be involved in trafficking or stabilization of the vesicular acetylcholine transporter unc-17. This Caenorhabditis elegans protein is Protein SUP-1.